Here is a 282-residue protein sequence, read N- to C-terminus: Pantothenate synthetase (282 aa).

26 to 33 (MGNLHEGH) serves as a coordination point for ATP. The Proton donor role is filled by His-33. Gln-57 contributes to the (R)-pantoate binding site. Residue Gln-57 coordinates beta-alanine. ATP is bound at residue 144 to 147 (GKKD). Gln-150 is a binding site for (R)-pantoate. Residues Val-173 and 181–184 (LSSR) contribute to the ATP site.

This sequence belongs to the pantothenate synthetase family. Homodimer.

The protein resides in the cytoplasm. It catalyses the reaction (R)-pantoate + beta-alanine + ATP = (R)-pantothenate + AMP + diphosphate + H(+). It participates in cofactor biosynthesis; (R)-pantothenate biosynthesis; (R)-pantothenate from (R)-pantoate and beta-alanine: step 1/1. Catalyzes the condensation of pantoate with beta-alanine in an ATP-dependent reaction via a pantoyl-adenylate intermediate. The protein is Pantothenate synthetase of Cupriavidus taiwanensis (strain DSM 17343 / BCRC 17206 / CCUG 44338 / CIP 107171 / LMG 19424 / R1) (Ralstonia taiwanensis (strain LMG 19424)).